Consider the following 508-residue polypeptide: Fasciclin-3 (508 aa).

Residues 1-20 (MSRIVFICLAAILTDALTWA) form the signal peptide. The residue at position 21 (Q21) is a Pyrrolidone carboxylic acid. At 21-346 (QVNVEPNTAL…SSKPPSSSLD (326 aa)) the chain is on the extracellular side. The region spanning 44 to 106 (GRSINYCRIE…NGQVKCSLGV (63 aa)) is the Ig-like V-type domain. Ig-like C2-type domains are found at residues 126–223 (PIIE…ESVP) and 236–310 (APVH…GLTL). C150 and C211 are oxidised to a cystine. N-linked (GlcNAc...) asparagine glycosylation is found at N160, N257, and N300. A helical membrane pass occupies residues 347–370 (VAAIVGIVVAVAVLVLVVLLIVFA). Topologically, residues 371–508 (RATGRWCFGG…QSTSPVWTFK (138 aa)) are cytoplasmic. A disordered region spans residues 381 to 439 (KSIKTPTNETSDTESADIKATSTATATTTMGGVGVSAEEEETVNEQESPQEQQQQQQKK). S382 is modified (phosphoserine). Low complexity-rich tracts occupy residues 400 to 409 (ATSTATATTT) and 425 to 437 (EQES…QQQQ). S459 is modified (phosphoserine).

In terms of tissue distribution, expressed on different subsets of axon bundles (fascicles) in insect embryos.

It localises to the membrane. Functionally, mediates cell adhesion in a Ca(2+)-independent manner. It plays a role in axon outgrowth, guidance and fasciculation of the developing nervous system. Function in neurons is essential for adult survival, and is important for climbing behavior and activity. The sequence is that of Fasciclin-3 (Fas3) from Drosophila melanogaster (Fruit fly).